We begin with the raw amino-acid sequence, 54 residues long: UPF0391 membrane protein Bpet1858 (54 aa).

The next 2 helical transmembrane spans lie at 5-25 (AVVF…GIAA) and 27-47 (AAGI…LSIL).

The protein belongs to the UPF0391 family.

The protein resides in the cell membrane. This is UPF0391 membrane protein Bpet1858 from Bordetella petrii (strain ATCC BAA-461 / DSM 12804 / CCUG 43448).